Here is a 159-residue protein sequence, read N- to C-terminus: MSSGFSHMDGDGSITMVDVGDKKDTRRTAIVRGKVEMAPATLDMLVKQALPKGDVLTTAKVAGIQAAKRTWELIPLCHPLFLSYVDVRFTVDESLPGVVVEAEARTTGQTGVEMEALVAAQVAAMTIYDMCKAVQKDIVLRDCRLVYKSGGKSGEFRAC.

Residues 76–78 and 114–115 contribute to the substrate site; these read LCH and ME. Asp-129 is an active-site residue.

The protein belongs to the MoaC family. As to quaternary structure, homohexamer; trimer of dimers.

It carries out the reaction (8S)-3',8-cyclo-7,8-dihydroguanosine 5'-triphosphate = cyclic pyranopterin phosphate + diphosphate. It participates in cofactor biosynthesis; molybdopterin biosynthesis. Catalyzes the conversion of (8S)-3',8-cyclo-7,8-dihydroguanosine 5'-triphosphate to cyclic pyranopterin monophosphate (cPMP). The polypeptide is Cyclic pyranopterin monophosphate synthase (Oleidesulfovibrio alaskensis (strain ATCC BAA-1058 / DSM 17464 / G20) (Desulfovibrio alaskensis)).